The chain runs to 498 residues: Lysine--tRNA ligase (498 aa).

Mg(2+) contacts are provided by Glu-407 and Glu-414.

Belongs to the class-II aminoacyl-tRNA synthetase family. As to quaternary structure, homodimer. Mg(2+) serves as cofactor.

It localises to the cytoplasm. The enzyme catalyses tRNA(Lys) + L-lysine + ATP = L-lysyl-tRNA(Lys) + AMP + diphosphate. This chain is Lysine--tRNA ligase, found in Rhizobium etli (strain ATCC 51251 / DSM 11541 / JCM 21823 / NBRC 15573 / CFN 42).